We begin with the raw amino-acid sequence, 179 residues long: MSAKRSLKLDSVKKYNPVEASPLAKKKDLNSYSPTTGTCQISPFSSPTSHNAEDLRNGLSHGDETNSESRLSRRGQPQTAEDAFAELQSNVKSSLVRILKARENLTSLQALEGSRELENIIGVSDSSHILSAEVQKTQALMSQAEELQLLKRNHGQLPAREYAQPASSSAFLQLLLNSL.

The interval 1 to 79 (MSAKRSLKLD…RLSRRGQPQT (79 aa)) is disordered. Positions 30–50 (NSYSPTTGTCQISPFSSPTSH) are enriched in polar residues. Over residues 51-64 (NAEDLRNGLSHGDE) the composition is skewed to basic and acidic residues. The short motif at 172–176 (LQLLL) is the LXXLL motif element.

The protein localises to the nucleus. It is found in the chromosome. Its subcellular location is the centromere. It localises to the kinetochore. Transcription coregulator that can have both coactivator and corepressor functions. Involved in the coactivation of nuclear receptors for retinoid X (RXRs) and thyroid hormone (TRs) in a ligand-dependent fashion. Probable component of a centromeric complex involved in assembly of kinetochore proteins, mitotic progression and chromosome segregation. The polypeptide is Centromere protein R (CENPR) (Gallus gallus (Chicken)).